The primary structure comprises 295 residues: Diaminopimelate epimerase (295 aa).

Residues N13 and N69 each contribute to the substrate site. C78 functions as the Proton donor in the catalytic mechanism. Substrate contacts are provided by residues G79–N80, N173, N212, and E230–R231. C239 functions as the Proton acceptor in the catalytic mechanism. G240–T241 provides a ligand contact to substrate.

Belongs to the diaminopimelate epimerase family. As to quaternary structure, homodimer.

It localises to the cytoplasm. The catalysed reaction is (2S,6S)-2,6-diaminopimelate = meso-2,6-diaminopimelate. It functions in the pathway amino-acid biosynthesis; L-lysine biosynthesis via DAP pathway; DL-2,6-diaminopimelate from LL-2,6-diaminopimelate: step 1/1. Its function is as follows. Catalyzes the stereoinversion of LL-2,6-diaminopimelate (L,L-DAP) to meso-diaminopimelate (meso-DAP), a precursor of L-lysine. This chain is Diaminopimelate epimerase, found in Methanococcus aeolicus (strain ATCC BAA-1280 / DSM 17508 / OCM 812 / Nankai-3).